A 333-amino-acid chain; its full sequence is Nucleoid-associated protein VV1_3120 (333 aa).

It belongs to the YejK family.

The protein resides in the cytoplasm. It localises to the nucleoid. This chain is Nucleoid-associated protein VV1_3120, found in Vibrio vulnificus (strain CMCP6).